The sequence spans 323 residues: Acetyl-coenzyme A carboxylase carboxyl transferase subunit alpha (323 aa).

One can recognise a CoA carboxyltransferase C-terminal domain in the interval 39 to 293 (RLSKKSQQLT…RRALADSLRQ (255 aa)).

The protein belongs to the AccA family. In terms of assembly, acetyl-CoA carboxylase is a heterohexamer composed of biotin carboxyl carrier protein (AccB), biotin carboxylase (AccC) and two subunits each of ACCase subunit alpha (AccA) and ACCase subunit beta (AccD).

It localises to the cytoplasm. The enzyme catalyses N(6)-carboxybiotinyl-L-lysyl-[protein] + acetyl-CoA = N(6)-biotinyl-L-lysyl-[protein] + malonyl-CoA. Its pathway is lipid metabolism; malonyl-CoA biosynthesis; malonyl-CoA from acetyl-CoA: step 1/1. Functionally, component of the acetyl coenzyme A carboxylase (ACC) complex. First, biotin carboxylase catalyzes the carboxylation of biotin on its carrier protein (BCCP) and then the CO(2) group is transferred by the carboxyltransferase to acetyl-CoA to form malonyl-CoA. This chain is Acetyl-coenzyme A carboxylase carboxyl transferase subunit alpha, found in Burkholderia lata (strain ATCC 17760 / DSM 23089 / LMG 22485 / NCIMB 9086 / R18194 / 383).